The chain runs to 332 residues: 4-hydroxy-3-methylbut-2-enyl diphosphate reductase (332 aa).

Cys-13 lines the [4Fe-4S] cluster pocket. Residues His-41 and His-75 each contribute to the (2E)-4-hydroxy-3-methylbut-2-enyl diphosphate site. Positions 41 and 75 each coordinate dimethylallyl diphosphate. Residues His-41 and His-75 each contribute to the isopentenyl diphosphate site. Cys-97 is a binding site for [4Fe-4S] cluster. His-125 is a (2E)-4-hydroxy-3-methylbut-2-enyl diphosphate binding site. Residue His-125 participates in dimethylallyl diphosphate binding. Residue His-125 participates in isopentenyl diphosphate binding. The Proton donor role is filled by Glu-127. Thr-168 contributes to the (2E)-4-hydroxy-3-methylbut-2-enyl diphosphate binding site. A [4Fe-4S] cluster-binding site is contributed by Cys-229. The (2E)-4-hydroxy-3-methylbut-2-enyl diphosphate site is built by Ser-257, Ser-258, Asn-259, and Ser-306. 4 residues coordinate dimethylallyl diphosphate: Ser-257, Ser-258, Asn-259, and Ser-306. Ser-257, Ser-258, Asn-259, and Ser-306 together coordinate isopentenyl diphosphate.

The protein belongs to the IspH family. [4Fe-4S] cluster serves as cofactor.

The catalysed reaction is isopentenyl diphosphate + 2 oxidized [2Fe-2S]-[ferredoxin] + H2O = (2E)-4-hydroxy-3-methylbut-2-enyl diphosphate + 2 reduced [2Fe-2S]-[ferredoxin] + 2 H(+). It carries out the reaction dimethylallyl diphosphate + 2 oxidized [2Fe-2S]-[ferredoxin] + H2O = (2E)-4-hydroxy-3-methylbut-2-enyl diphosphate + 2 reduced [2Fe-2S]-[ferredoxin] + 2 H(+). Its pathway is isoprenoid biosynthesis; dimethylallyl diphosphate biosynthesis; dimethylallyl diphosphate from (2E)-4-hydroxy-3-methylbutenyl diphosphate: step 1/1. It participates in isoprenoid biosynthesis; isopentenyl diphosphate biosynthesis via DXP pathway; isopentenyl diphosphate from 1-deoxy-D-xylulose 5-phosphate: step 6/6. Functionally, catalyzes the conversion of 1-hydroxy-2-methyl-2-(E)-butenyl 4-diphosphate (HMBPP) into a mixture of isopentenyl diphosphate (IPP) and dimethylallyl diphosphate (DMAPP). Acts in the terminal step of the DOXP/MEP pathway for isoprenoid precursor biosynthesis. The protein is 4-hydroxy-3-methylbut-2-enyl diphosphate reductase of Chlorobaculum parvum (strain DSM 263 / NCIMB 8327) (Chlorobium vibrioforme subsp. thiosulfatophilum).